Consider the following 52-residue polypeptide: uncharacterized protein (52 aa).

Residues 1 to 52 are disordered; that stretch reads MVNNDAKIGRREFYDRVESVRPKSPPRERPTYTYSNSRTVDGYSNRGPRADF. Residues 7–30 show a composition bias toward basic and acidic residues; sequence KIGRREFYDRVESVRPKSPPRERP.

This is an uncharacterized protein from Dictyostelium discoideum (Social amoeba).